The sequence spans 1004 residues: Kinesin-like protein KIN-7I (1004 aa).

Residues lysine 6–valine 326 enclose the Kinesin motor domain. Glycine 89 to threonine 96 serves as a coordination point for ATP. 3 coiled-coil regions span residues valine 335–arginine 402, lysine 517–serine 576, and serine 634–glutamate 661. Disordered stretches follow at residues glutamate 567 to proline 599, serine 628 to glutamate 671, and threonine 802 to threonine 830. Basic and acidic residues-rich tracts occupy residues serine 569–methionine 582 and serine 634–lysine 652. A compositionally biased stretch (polar residues) spans glutamine 653–leucine 663. Lysine 881 is covalently cross-linked (Glycyl lysine isopeptide (Lys-Gly) (interchain with G-Cter in ubiquitin)).

The protein belongs to the TRAFAC class myosin-kinesin ATPase superfamily. Kinesin family. KIN-7 subfamily.

This Arabidopsis thaliana (Mouse-ear cress) protein is Kinesin-like protein KIN-7I.